The primary structure comprises 201 residues: MSGKSLLLKVILLGDGGVGKSSLMNRYVTNKFDSQAFHTIGVEFLNRDLEVDGRFVTLQIWDTAGQERFKSLRTPFYRGADCCLLTFSVDDRQSFENLGNWQKEFIYYADVKDPEHFPFVVLGNKVDKEDRQVTTEEAQTWCMENGDYPYLETSAKDDTNVTVAFEEAVRQVLAVEEQLEHCMLGHTIDLNSGSKAGSSCC.

GTP is bound by residues V18, G19, K20, S21, S22, D33, S34, A36, H38, and T39. S21 contacts Mg(2+). Positions 31-42 (KFDSQAFHTIGV) match the Switch 1 motif. Residue S34 is modified to Phosphoserine. The Mg(2+) site is built by T39 and D62. A Switch 2 motif is present at residues 64–78 (AGQERFKSLRTPFYR). Residues G65, N124, K125, A155, and K156 each coordinate GTP. S-geranylgeranyl cysteine attachment occurs at residues C200 and C201.

Belongs to the small GTPase superfamily. Rab family. As to quaternary structure, interacts (GTP-bound form) with SGSM1; the GDP-bound form has much lower affinity for SGSM1. The GTP-bound form but not the GDP-bound form interacts with HPS4 and the BLOC-3 complex (heterodimer of HPS1 and HPS4) but does not interact with HPS1 alone. Interacts (GTP-bound form) with NDE1. The cofactor is Mg(2+). In terms of tissue distribution, ubiquitous.

The protein localises to the cell membrane. It is found in the cytoplasmic vesicle. The protein resides in the phagosome. Its subcellular location is the phagosome membrane. It catalyses the reaction GTP + H2O = GDP + phosphate + H(+). Its activity is regulated as follows. Regulated by guanine nucleotide exchange factors (GEFs) which promote the exchange of bound GDP for free GTP. Regulated by GTPase activating proteins (GAPs) which increase the GTP hydrolysis activity. Inhibited by GDP dissociation inhibitors (GDIs). Its function is as follows. The small GTPases Rab are key regulators of intracellular membrane trafficking, from the formation of transport vesicles to their fusion with membranes. Rabs cycle between an inactive GDP-bound form and an active GTP-bound form that is able to recruit to membranes different sets of downstream effectors directly responsible for vesicle formation, movement, tethering and fusion. RAB9B is involved in the transport of proteins between the endosomes and the trans Golgi network. May use NDE1/NDEL1 as an effector to interact with the dynein motor complex in order to control retrograde trafficking of RAB9-associated late endosomes to the TGN. The polypeptide is Ras-related protein Rab-9B (Homo sapiens (Human)).